Consider the following 209-residue polypeptide: Potassium-transporting ATPase KdpC subunit (209 aa).

The chain crosses the membrane as a helical span at residues 18 to 38; that stretch reads MLAVFTLFGLGLAYSLVATGI.

This sequence belongs to the KdpC family. As to quaternary structure, the system is composed of three essential subunits: KdpA, KdpB and KdpC.

It is found in the cell inner membrane. Part of the high-affinity ATP-driven potassium transport (or Kdp) system, which catalyzes the hydrolysis of ATP coupled with the electrogenic transport of potassium into the cytoplasm. This subunit acts as a catalytic chaperone that increases the ATP-binding affinity of the ATP-hydrolyzing subunit KdpB by the formation of a transient KdpB/KdpC/ATP ternary complex. The protein is Potassium-transporting ATPase KdpC subunit of Xanthomonas oryzae pv. oryzae (strain MAFF 311018).